We begin with the raw amino-acid sequence, 89 residues long: Acylphosphatase (89 aa).

Residues 3–89 (RMTAWVHGFV…RGDLTGFVER (87 aa)) enclose the Acylphosphatase-like domain. Active-site residues include arginine 18 and asparagine 36.

Belongs to the acylphosphatase family.

The catalysed reaction is an acyl phosphate + H2O = a carboxylate + phosphate + H(+). The polypeptide is Acylphosphatase (acyP) (Rhodococcus jostii (strain RHA1)).